We begin with the raw amino-acid sequence, 609 residues long: Pentatricopeptide repeat-containing protein At5g13770, chloroplastic (609 aa).

The N-terminal 44 residues, 1 to 44, are a transit peptide targeting the chloroplast; the sequence is MAIASGSWVATVNHHANPHSFTSPTKPIFFLSQKPHNFHVCSSR. 13 PPR repeats span residues 103-137, 138-168, 172-207, 208-242, 247-281, 282-316, 317-351, 352-386, 387-421, 422-456, 457-491, 492-526, and 527-561; these read ELRTTKHLISYLVSSKSWDLLVSVCEDLREHKALP, DGQTCSNLIRSCIRDRKFRITHCLLSVFRSD, AVSASDAAMKGFNKLQMYSSTIQVFDRLKQSVGVEP, SPGCYCRIMEAHEKIGENHKVVELFQEFKSQRLSF, SGSIYTIVCSSLAKSGRAFEALEVLEEMKDKGIPE, SSELYSMLIRAFAEAREVVITEKLFKEAGGKKLLK, DPEMCLKVVLMYVREGNMETTLEVVAAMRKAELKV, TDCILCAIVNGFSKQRGFAEAVKVYEWAMKEECEA, GQVTYAIAINAYCRLEKYNKAEMLFDEMVKKGFDK, CVVAYSNIMDMYGKTRRLSDAVRLMAKMKQRGCKP, NIWIYNSLIDMHGRAMDLRRAEKIWKEMKRAKVLP, DKVSYTSMISAYNRSKELERCVELYQEFRMNRGKI, and DRAMAGIMVGVFSKTSRIDELMRLLQDMKVEGTRL.

This sequence belongs to the PPR family. P subfamily.

Its subcellular location is the plastid. It localises to the chloroplast. This Arabidopsis thaliana (Mouse-ear cress) protein is Pentatricopeptide repeat-containing protein At5g13770, chloroplastic.